A 108-amino-acid chain; its full sequence is UPF0145 protein Tmel_1129 (108 aa).

It belongs to the UPF0145 family.

This chain is UPF0145 protein Tmel_1129, found in Thermosipho melanesiensis (strain DSM 12029 / CIP 104789 / BI429).